The primary structure comprises 685 residues: tRNA-dihydrouridine(47) synthase [NAD(P)(+)]-like (685 aa).

Low complexity predominate over residues 1-12 (MAATAAAAAAAP). 3 disordered regions span residues 1–91 (MAAT…SSSH), 209–234 (AAND…PLCN), and 257–314 (LIDN…SCRT). The span at 13–29 (PADPPDSSPAASSPPRP) shows a compositional bias: pro residues. A C3H1-type zinc finger spans residues 87-118 (KSSSHLCIEVGKSGNVSSCKYGDSCRFSHDID). Basic and acidic residues-rich tracts occupy residues 209–221 (AAND…HDNL) and 273–284 (SKVESDEIDKHG). The span at 287 to 314 (TLNTNTESEDPNLSNGLEPSNNSSSCRT) shows a compositional bias: polar residues. FMN is bound by residues 338–340 (PLT) and Q392. Residue C423 is the Proton donor of the active site. Residues K462, H492, 525 to 527 (NGD), and 550 to 551 (AR) each bind FMN.

The protein belongs to the Dus family. Dus3 subfamily. The cofactor is FMN.

It carries out the reaction 5,6-dihydrouridine(47) in tRNA + NAD(+) = uridine(47) in tRNA + NADH + H(+). The enzyme catalyses 5,6-dihydrouridine(47) in tRNA + NADP(+) = uridine(47) in tRNA + NADPH + H(+). It catalyses the reaction a 5,6-dihydrouridine in mRNA + NAD(+) = a uridine in mRNA + NADH + H(+). The catalysed reaction is a 5,6-dihydrouridine in mRNA + NADP(+) = a uridine in mRNA + NADPH + H(+). In terms of biological role, catalyzes the synthesis of dihydrouridine, a modified base found in the D-loop of most tRNAs. Specifically modifies U47 in cytoplasmic tRNAs. Catalyzes the synthesis of dihydrouridine in some mRNAs, thereby affecting their translation. This Oryza sativa subsp. japonica (Rice) protein is tRNA-dihydrouridine(47) synthase [NAD(P)(+)]-like.